Consider the following 618-residue polypeptide: 1-deoxy-D-xylulose-5-phosphate synthase (618 aa).

Residues His70 and 111–113 (GHS) contribute to the thiamine diphosphate site. Asp142 is a Mg(2+) binding site. Thiamine diphosphate contacts are provided by residues 143–144 (GS), Asn171, Tyr278, and Glu360. Mg(2+) is bound at residue Asn171.

This sequence belongs to the transketolase family. DXPS subfamily. Homodimer. Mg(2+) serves as cofactor. Thiamine diphosphate is required as a cofactor.

It catalyses the reaction D-glyceraldehyde 3-phosphate + pyruvate + H(+) = 1-deoxy-D-xylulose 5-phosphate + CO2. Its pathway is metabolic intermediate biosynthesis; 1-deoxy-D-xylulose 5-phosphate biosynthesis; 1-deoxy-D-xylulose 5-phosphate from D-glyceraldehyde 3-phosphate and pyruvate: step 1/1. Catalyzes the acyloin condensation reaction between C atoms 2 and 3 of pyruvate and glyceraldehyde 3-phosphate to yield 1-deoxy-D-xylulose-5-phosphate (DXP). The protein is 1-deoxy-D-xylulose-5-phosphate synthase of Helicobacter pylori (strain HPAG1).